The following is a 394-amino-acid chain: MVSVTTKILILGSTGSIGTQALEVIADNPDLFTLVGIAAGGSNPGLVIEQARAFNLRPHQVAVAGKQAAGEVGEALGGTVIDGPDAAQTLVESVQATDPADAVLNALVGSMGLGATLATLRSGAHLALANKESLVAGGEFVMAQARPGQIIPVDSEHSAMAQCLRSGTEGEVARIVLTASGGPFRGWTREQMWEVTPEQAAAHPTWSMGQMNTLNSATLINKGLELIEATLLFDTDADLIDVTVHPQSIIHSMITFRDGCTIAQASPPSMKLPIALAMNWPHRVPGAQPALDFTQAHTWTFEPVDDAAFPAVQLARDVAKQKGTFPAVYNAANEEAAAAFLAGRIRFPQIVDVVSEILQGASQFAGVSSDVDDILATESEARARANQLIDRLAR.

Residues T14, G15, S16, I17, G40, N43, and N130 each coordinate NADPH. K131 contacts 1-deoxy-D-xylulose 5-phosphate. E132 is a binding site for NADPH. D154 is a Mn(2+) binding site. 1-deoxy-D-xylulose 5-phosphate is bound by residues S155, E156, S180, and H203. Mn(2+) is bound at residue E156. G209 lines the NADPH pocket. Positions 216, 221, 222, and 225 each coordinate 1-deoxy-D-xylulose 5-phosphate. Residue E225 coordinates Mn(2+).

It belongs to the DXR family. Mg(2+) serves as cofactor. Mn(2+) is required as a cofactor.

The enzyme catalyses 2-C-methyl-D-erythritol 4-phosphate + NADP(+) = 1-deoxy-D-xylulose 5-phosphate + NADPH + H(+). Its pathway is isoprenoid biosynthesis; isopentenyl diphosphate biosynthesis via DXP pathway; isopentenyl diphosphate from 1-deoxy-D-xylulose 5-phosphate: step 1/6. Functionally, catalyzes the NADPH-dependent rearrangement and reduction of 1-deoxy-D-xylulose-5-phosphate (DXP) to 2-C-methyl-D-erythritol 4-phosphate (MEP). In Corynebacterium efficiens (strain DSM 44549 / YS-314 / AJ 12310 / JCM 11189 / NBRC 100395), this protein is 1-deoxy-D-xylulose 5-phosphate reductoisomerase.